A 343-amino-acid chain; its full sequence is Calcium/calmodulin-dependent protein kinase type 1B (343 aa).

A Protein kinase domain is found at 15–270 (YEIRERLGSG…CQQALRHLWI (256 aa)). ATP-binding positions include 21 to 29 (LGSGAFSEV) and lysine 44. Aspartate 136 functions as the Proton acceptor in the catalytic mechanism. The tract at residues 290–311 (KNFARTHWKRAFNATSFLRHIR) is calmodulin-binding. Residues 319 to 343 (GEGASEQGMARHSHSGLRAGQPPKW) form a disordered region.

Belongs to the protein kinase superfamily. CAMK Ser/Thr protein kinase family. CaMK subfamily. Post-translationally, phosphorylated by CAMKK1.

The protein resides in the cytoplasm. It localises to the nucleus. The enzyme catalyses L-seryl-[protein] + ATP = O-phospho-L-seryl-[protein] + ADP + H(+). It carries out the reaction L-threonyl-[protein] + ATP = O-phospho-L-threonyl-[protein] + ADP + H(+). With respect to regulation, activated by Ca(2+)/calmodulin. Its function is as follows. Calcium/calmodulin-dependent protein kinase belonging to a proposed calcium-triggered signaling cascade. In vitro phosphorylates CREB1 and SYN1/synapsin I. Phosphorylates and activates CAMK1. This chain is Calcium/calmodulin-dependent protein kinase type 1B (PNCK), found in Homo sapiens (Human).